Reading from the N-terminus, the 1412-residue chain is MPN domain-containing protein CG4751 (1412 aa).

Residues 1–10 show a composition bias toward basic and acidic residues; sequence MENGVEHGVD. The tract at residues 1 to 123 is disordered; that stretch reads MENGVEHGVD…TKENYEGFNG (123 aa). Composition is skewed to acidic residues over residues 23-35 and 103-114; these read GEGD…EVEG and SDAGDEDNDDET. Positions 113–219 constitute an RAMA domain; the sequence is ETKENYEGFN…AYKNTYLRKC (107 aa). The region spanning 284-420 is the MPN domain; it reads ITVNSSALLL…LESVVKCIWI (137 aa). His361, His363, and Asp374 together coordinate Zn(2+). 7 disordered regions span residues 554 to 589, 669 to 734, 853 to 891, 1027 to 1066, 1271 to 1318, 1330 to 1376, and 1389 to 1412; these read INPP…QKAS, SALN…DIAR, GGSG…NSYK, SIPP…QQQQ, MKPP…NSGG, SSVP…SGGV, and LAAP…LSHD. The stretch at 572 to 600 forms a coiled coil; it reads SGRKAEEESNAQAEQKASELKVMSLQEQL. Phosphoserine occurs at positions 699, 701, 705, 719, 723, and 728. Over residues 702 to 720 the composition is skewed to polar residues; that stretch reads PAKSDTSSHASTSRTRNSP. Composition is skewed to low complexity over residues 873-891 and 1036-1066; these read KSSS…NSYK and SSGS…QQQQ. Over residues 1275–1290 the composition is skewed to polar residues; that stretch reads KSTTPSSARTRESSAS. Residues Ser1288 and Ser1290 each carry the phosphoserine modification. Phosphothreonine is present on Thr1297. Residues 1360–1370 show a composition bias toward low complexity; the sequence is LYGELAPPGAL.

The protein belongs to the peptidase M67 family.

In terms of biological role, probable protease. The polypeptide is MPN domain-containing protein CG4751 (Drosophila melanogaster (Fruit fly)).